The primary structure comprises 337 residues: Dimethyladenosine transferase 1, mitochondrial (337 aa).

Residues 1 to 84 (MSQVTARVLN…RSILRRQPQR (84 aa)) constitute a mitochondrion transit peptide. S-adenosyl-L-methionine-binding positions include 38 to 41 (QNFL), Asn-39, Leu-41, Gly-67, Glu-89, Asp-118, and Asn-140.

The protein belongs to the class I-like SAM-binding methyltransferase superfamily. rRNA adenine N(6)-methyltransferase family. KsgA subfamily.

It localises to the mitochondrion. Probable S-adenosyl-L-methionine-dependent methyltransferase which specifically dimethylates mitochondrial 12S rRNA at the conserved stem loop. The protein is Dimethyladenosine transferase 1, mitochondrial (mtTFB1) of Drosophila pseudoobscura pseudoobscura (Fruit fly).